A 424-amino-acid polypeptide reads, in one-letter code: Enolase (424 aa).

(2R)-2-phosphoglycerate is bound at residue Q165. The Proton donor role is filled by E207. Mg(2+) is bound by residues D244, E283, and D310. The (2R)-2-phosphoglycerate site is built by K335, R364, S365, and K386. K335 (proton acceptor) is an active-site residue.

The protein belongs to the enolase family. The cofactor is Mg(2+).

Its subcellular location is the cytoplasm. The protein localises to the secreted. It localises to the cell surface. The catalysed reaction is (2R)-2-phosphoglycerate = phosphoenolpyruvate + H2O. The protein operates within carbohydrate degradation; glycolysis; pyruvate from D-glyceraldehyde 3-phosphate: step 4/5. In terms of biological role, catalyzes the reversible conversion of 2-phosphoglycerate (2-PG) into phosphoenolpyruvate (PEP). It is essential for the degradation of carbohydrates via glycolysis. This is Enolase from Chlamydia abortus (strain DSM 27085 / S26/3) (Chlamydophila abortus).